The following is a 199-amino-acid chain: Protein ZNRD2 (199 aa).

The residue at position 2 (A2) is an N-acetylalanine. Zn(2+) contacts are provided by C53, C56, C70, and C73. The disordered stretch occupies residues 93 to 148 (LSQAREHQLASSTEPASSSRPPSQPPVPRPEHCEGAAAGLKAAQAPPLPAAPPNTD). The residue at position 94 (S94) is a Phosphoserine. Residues 127-137 (GAAAGLKAAQA) show a composition bias toward low complexity. The Nuclear export signal motif lies at 173 to 194 (SLETSIQLCGLIRACAEALGSL).

As to quaternary structure, homodimer. Zn(2+) is required as a cofactor. As to expression, expressed in the early postnatal brain.

Its subcellular location is the cytoplasm. Its function is as follows. Might play a role in mitosis. Could be a centromere-associated protein. Antigenic molecule. May induce anti-centromere antibodies. This is Protein ZNRD2 (Znrd2) from Mus musculus (Mouse).